The sequence spans 402 residues: Phosphoglycerate kinase (402 aa).

Substrate contacts are provided by residues 24 to 26 (DFN), arginine 40, 63 to 66 (HFGR), arginine 122, and arginine 155. ATP contacts are provided by residues lysine 206, glycine 297, glutamate 328, and 357 to 360 (GGDS).

The protein belongs to the phosphoglycerate kinase family. Monomer.

It is found in the cytoplasm. It carries out the reaction (2R)-3-phosphoglycerate + ATP = (2R)-3-phospho-glyceroyl phosphate + ADP. The protein operates within carbohydrate degradation; glycolysis; pyruvate from D-glyceraldehyde 3-phosphate: step 2/5. This chain is Phosphoglycerate kinase, found in Prochlorococcus marinus (strain SARG / CCMP1375 / SS120).